The following is a 654-amino-acid chain: Myrosinase-binding protein 2 (654 aa).

4 consecutive Jacalin-type lectin domains span residues 2–151 (SEKV…HFFA), 156–291 (LKHF…HFAP), 346–489 (PNKV…YFAP), and 502–645 (AKKL…HAVP). The segment covering 314–346 (VPAPSPAPAPSPAPAPAPAPAPAPTPAPAPAPP) has biased composition (pro residues). The tract at residues 314–355 (VPAPSPAPAPSPAPAPAPAPAPAPTPAPAPAPPNKVEALGGN) is disordered.

It belongs to the jacalin lectin family. As to expression, expressed in flowers. Detected mainly in ovules and styles of immature flowers, but also in pistils, styles, stamens, petals and embryos. Not detected in leaves.

The sequence is that of Myrosinase-binding protein 2 (MBP2) from Arabidopsis thaliana (Mouse-ear cress).